Here is a 160-residue protein sequence, read N- to C-terminus: 17.9 kDa class II heat shock protein (160 aa).

In terms of domain architecture, sHSP spans 44-160; sequence DARAMAATPA…KPKTIQVQVA (117 aa).

The protein belongs to the small heat shock protein (HSP20) family.

The protein localises to the cytoplasm. This Helianthus annuus (Common sunflower) protein is 17.9 kDa class II heat shock protein (HSP17.9).